The following is a 580-amino-acid chain: uncharacterized protein (580 aa).

Disordered regions lie at residues 161–241 (SFSP…SVND), 256–281 (LGSLSTNTSSTAQKNKSRKPTKSFSD), 325–345 (NVSHEEKSHSVQDDKSKQLLK), 472–495 (PRDTDIKATPNLSQSGNINSDNSD), and 544–564 (SAVLRRQSSQSSGANDDKEVR). A compositionally biased stretch (low complexity) spans 192 to 203 (SNSNSSDTSTDD). Polar residues-rich tracts occupy residues 223 to 241 (THSSAPPLNQQKSSTSVND) and 256 to 269 (LGSLSTNTSSTAQK). Residues 326–341 (VSHEEKSHSVQDDKSK) show a composition bias toward basic and acidic residues. The segment covering 481-495 (PNLSQSGNINSDNSD) has biased composition (polar residues).

This is an uncharacterized protein from Schizosaccharomyces pombe (strain 972 / ATCC 24843) (Fission yeast).